The sequence spans 507 residues: MASEQDVRARLQRAGQEHLLRFWAELAPEPRAALLAELALLEPEALREHCRRAAEACARPHGPPPDLAARLRPLPPERVGRASRSDPETRRRWEEEGFRQISLNKVAVLLLAGGQGTRLGVTYPKGMYRVGLPSRKTLYQLQAERIRRVEQLAGERHGTRCTVPWYVMTSEFTLGPTAEFFREHNFFHLDPANVVMFEQRLLPAVTFDGKVILERKDKVAMAPDGNGGLYCALEDHKILEDMERRGVEFVHVYCVDNILVRLADPVFIGFCVLQGADCGAKVVEKAYPEEPVGVVCQVDGVPQVVEYSEISPETAQLRASDGSLLYNAGNICNHFFTRGFLKAVTREFEPLLKPHVAVKKVPYVDEEGNLVKPLKPNGIKMEKFVFDVFRFAKNFAALEVLREEEFSPLKNAEPADRDSPRTARQALLTQHYRWALRAGARFLDAHGAWLPELPSLPPNGDPPAICEISPLVSYSGEGLEVYLQGREFQSPLILDEDQAREPQLQES.

The disordered stretch occupies residues 56–91 (ACARPHGPPPDLAARLRPLPPERVGRASRSDPETRR). The span at 78–91 (RVGRASRSDPETRR) shows a compositional bias: basic and acidic residues. The Substrate binding motif lies at 111-114 (LAGG). UTP is bound by residues 111–114 (LAGG), Lys-125, Gln-199, and Gly-225. Position 226 (Asn-226) interacts with substrate. Asp-256 contributes to the UTP binding site. The short motif at 306–307 (EY) is the Substrate binding element. Lys-380 contacts UTP. Lys-410 is a substrate binding site.

The protein belongs to the UDPGP type 1 family.

This chain is UDP-N-acetylhexosamine pyrophosphorylase-like protein 1 (UAP1L1), found in Homo sapiens (Human).